A 551-amino-acid chain; its full sequence is Protein GZF3 (551 aa).

The disordered stretch occupies residues 17-43 (DNVFEPKSSENLNSLNQSEEEGHIGRW). The segment at 131-155 (CKNCLTSTTPLWRRDEHGAMLCNAC) adopts a GATA-type zinc-finger fold. 3 disordered regions span residues 212–260 (GRKA…SATK), 379–400 (LAPT…QIRS), and 467–490 (SISN…AKDL). The span at 228–239 (SQLLMGTSSTAK) shows a compositional bias: polar residues. Residues 244–254 (PKTESKERSDS) are compositionally biased toward basic and acidic residues. A compositionally biased stretch (polar residues) spans 388–400 (DSNPSEVPNQIRS). Residues 467 to 477 (SISNSVSSSDV) are compositionally biased toward low complexity. Over residues 478–490 (SGRKFENHPAKDL) the composition is skewed to basic and acidic residues.

The protein resides in the nucleus. The protein is Protein GZF3 (GZF3) of Saccharomyces cerevisiae (strain ATCC 204508 / S288c) (Baker's yeast).